The following is a 349-amino-acid chain: tRNA pseudouridine synthase D (349 aa).

A substrate-binding site is contributed by Phe-27. The Nucleophile role is filled by Asp-80. Asn-129 is a substrate binding site. The TRUD domain maps to 155 to 303; sequence GVPNYFGAQR…VEAARRAMLL (149 aa). Phe-329 is a substrate binding site.

This sequence belongs to the pseudouridine synthase TruD family.

The enzyme catalyses uridine(13) in tRNA = pseudouridine(13) in tRNA. Functionally, responsible for synthesis of pseudouridine from uracil-13 in transfer RNAs. This is tRNA pseudouridine synthase D from Shigella boydii serotype 4 (strain Sb227).